The chain runs to 459 residues: NADP-specific glutamate dehydrogenase (459 aa).

Lysine 116 is a catalytic residue.

It belongs to the Glu/Leu/Phe/Val dehydrogenases family. As to quaternary structure, homohexamer.

The catalysed reaction is L-glutamate + NADP(+) + H2O = 2-oxoglutarate + NH4(+) + NADPH + H(+). This is NADP-specific glutamate dehydrogenase (GDHA) from Schwanniomyces occidentalis (Yeast).